A 257-amino-acid chain; its full sequence is Acetylglutamate kinase (257 aa).

Substrate-binding positions include 43-44 (GG), Arg65, and Asn157. ATP is bound by residues 180 to 185 (DVSGIL) and 208 to 210 (IIT).

The protein belongs to the acetylglutamate kinase family. ArgB subfamily. Homodimer.

Its subcellular location is the cytoplasm. It catalyses the reaction N-acetyl-L-glutamate + ATP = N-acetyl-L-glutamyl 5-phosphate + ADP. The protein operates within amino-acid biosynthesis; L-arginine biosynthesis; N(2)-acetyl-L-ornithine from L-glutamate: step 2/4. In terms of biological role, catalyzes the ATP-dependent phosphorylation of N-acetyl-L-glutamate. This chain is Acetylglutamate kinase, found in Photorhabdus laumondii subsp. laumondii (strain DSM 15139 / CIP 105565 / TT01) (Photorhabdus luminescens subsp. laumondii).